A 521-amino-acid polypeptide reads, in one-letter code: Protein nucleotidyltransferase YdiU (521 aa).

Residues Gly-109, Gly-111, Arg-112, Lys-131, Asp-143, Gly-144, Arg-194, and Arg-201 each contribute to the ATP site. Asp-270 serves as the catalytic Proton acceptor. Positions 271 and 280 each coordinate Mg(2+). Asp-280 is a binding site for ATP.

It belongs to the SELO family. It depends on Mg(2+) as a cofactor. The cofactor is Mn(2+).

The catalysed reaction is L-seryl-[protein] + ATP = 3-O-(5'-adenylyl)-L-seryl-[protein] + diphosphate. It carries out the reaction L-threonyl-[protein] + ATP = 3-O-(5'-adenylyl)-L-threonyl-[protein] + diphosphate. It catalyses the reaction L-tyrosyl-[protein] + ATP = O-(5'-adenylyl)-L-tyrosyl-[protein] + diphosphate. The enzyme catalyses L-histidyl-[protein] + UTP = N(tele)-(5'-uridylyl)-L-histidyl-[protein] + diphosphate. The catalysed reaction is L-seryl-[protein] + UTP = O-(5'-uridylyl)-L-seryl-[protein] + diphosphate. It carries out the reaction L-tyrosyl-[protein] + UTP = O-(5'-uridylyl)-L-tyrosyl-[protein] + diphosphate. In terms of biological role, nucleotidyltransferase involved in the post-translational modification of proteins. It can catalyze the addition of adenosine monophosphate (AMP) or uridine monophosphate (UMP) to a protein, resulting in modifications known as AMPylation and UMPylation. The polypeptide is Protein nucleotidyltransferase YdiU (Burkholderia thailandensis (strain ATCC 700388 / DSM 13276 / CCUG 48851 / CIP 106301 / E264)).